The sequence spans 269 residues: Phosphate import ATP-binding protein PstB (269 aa).

An ABC transporter domain is found at 21–264 (SEVRNLSFYY…PKNKQTEDYI (244 aa)). 53-60 (GPSGCGKS) contributes to the ATP binding site.

The protein belongs to the ABC transporter superfamily. Phosphate importer (TC 3.A.1.7) family. As to quaternary structure, the complex is composed of two ATP-binding proteins (PstB), two transmembrane proteins (PstC and PstA) and a solute-binding protein (PstS).

Its subcellular location is the cell inner membrane. It catalyses the reaction phosphate(out) + ATP + H2O = ADP + 2 phosphate(in) + H(+). Functionally, part of the ABC transporter complex PstSACB involved in phosphate import. Responsible for energy coupling to the transport system. The protein is Phosphate import ATP-binding protein PstB of Nitrosospira multiformis (strain ATCC 25196 / NCIMB 11849 / C 71).